A 338-amino-acid polypeptide reads, in one-letter code: Anthocyanidin reductase ((2S)-flavan-3-ol-forming) (338 aa).

NADP(+) contacts are provided by residues 18-21, K48, 87-90, and Y168; these read TGFV and VATP.

This sequence belongs to the NAD(P)-dependent epimerase/dehydratase family. Dihydroflavonol-4-reductase subfamily.

The enzyme catalyses a (2S,3R)-flavan-3-ol + 2 NADP(+) = an anthocyanidin with a 3-hydroxy group + 2 NADPH + 2 H(+). It catalyses the reaction a (2S,3S)-flavan-3-ol + 2 NADP(+) = an anthocyanidin with a 3-hydroxy group + 2 NADPH + 2 H(+). It participates in secondary metabolite biosynthesis; flavonoid biosynthesis. Its function is as follows. Produces the terminal flavan-3-ol monomers required for the formation of proanthocyanidins or condensed tannins in leaves and flowers, as well as in the skin and seeds of developing berries. Behaves as a reductase and as a C-3 epimerase. Catalyzes the double reduction of anthocyanidins, producing a mixture of (2S,3S)- and (2S,3R)-flavan-3-ols. The enzyme catalyzes sequential hydride transfers to C-2 and C-4, respectively and epimerization at C-3 is achieved by tautomerization that occurs between the two hydride transfers. Converts cyanidin, pelargonidin and delphinidin into catechin and epicatechin, afzelechin and epiafzelechin, and gallocatechin and epigallocatechin respectively. The sequence is that of Anthocyanidin reductase ((2S)-flavan-3-ol-forming) from Vitis vinifera (Grape).